We begin with the raw amino-acid sequence, 38 residues long: Toxin Bot33 (38 aa).

3 disulfides stabilise this stretch: Cys8/Cys28, Cys14/Cys33, and Cys18/Cys35.

It belongs to the short scorpion toxin superfamily. Potassium channel inhibitor family. In terms of tissue distribution, expressed by the venom gland.

The protein localises to the secreted. In terms of biological role, a probable toxin that has no activity on the tested mammalian voltage-gated potassium channels (when tested at 1 uM) and is not toxic to mice. It resembles alpha toxins that block voltage-gated potassium channels. The protein is Toxin Bot33 of Buthus occitanus tunetanus (Common European scorpion).